An 88-amino-acid polypeptide reads, in one-letter code: UPF0213 protein EF_2693 (88 aa).

The GIY-YIG domain maps to 5–82; the sequence is KSHYFYVLLC…KKLTRKQKEQ (78 aa).

Belongs to the UPF0213 family.

In Enterococcus faecalis (strain ATCC 700802 / V583), this protein is UPF0213 protein EF_2693.